A 341-amino-acid polypeptide reads, in one-letter code: tRNA N6-adenosine threonylcarbamoyltransferase (341 aa).

Residues histidine 119 and histidine 123 each coordinate Fe cation. Substrate is bound by residues 141-145 (MVSGG), aspartate 174, glycine 187, and asparagine 279. Residue aspartate 307 participates in Fe cation binding.

Belongs to the KAE1 / TsaD family. The cofactor is Fe(2+).

The protein localises to the cytoplasm. The catalysed reaction is L-threonylcarbamoyladenylate + adenosine(37) in tRNA = N(6)-L-threonylcarbamoyladenosine(37) in tRNA + AMP + H(+). Functionally, required for the formation of a threonylcarbamoyl group on adenosine at position 37 (t(6)A37) in tRNAs that read codons beginning with adenine. Is involved in the transfer of the threonylcarbamoyl moiety of threonylcarbamoyl-AMP (TC-AMP) to the N6 group of A37, together with TsaE and TsaB. TsaD likely plays a direct catalytic role in this reaction. The sequence is that of tRNA N6-adenosine threonylcarbamoyltransferase from Oenococcus oeni (strain ATCC BAA-331 / PSU-1).